The following is a 623-amino-acid chain: Transcriptional activator of proteases prtT (623 aa).

The segment at residues 50–79 (CHTCRKLKTRCDLDPRGHACRRCLSLRIDC) is a DNA-binding region (zn(2)-C6 fungal-type).

The protein belongs to the prtT family.

Its subcellular location is the nucleus. Transcription factor required for protein utilization and degradation. Regulates transcription of major secreted proteases. The sequence is that of Transcriptional activator of proteases prtT (prtT) from Aspergillus niger (strain ATCC MYA-4892 / CBS 513.88 / FGSC A1513).